The chain runs to 261 residues: 7beta-hydroxysteroid dehydrogenase (261 aa).

Residues 17–21 (TEGIG), 40–41 (RR), and 66–67 (DL) each bind NADP(+). The active-site Proton acceptor is Tyr-156.

Belongs to the short-chain dehydrogenases/reductases (SDR) family. Homodimer.

The enzyme catalyses a 7beta-hydroxysteroid + NADP(+) = a 7-oxosteroid + NADPH + H(+). It carries out the reaction ursocholate + NADP(+) = 3alpha,12alpha-dihydroxy-7-oxo-5beta-cholanate + NADPH + H(+). The catalysed reaction is 7-oxolithocholate + NADPH + H(+) = ursodeoxycholate + NADP(+). It catalyses the reaction 3alpha,7beta-dihydroxy-12-oxo-5beta-cholan-24-oate + NADP(+) = 7,12-dioxo-lithocholate + NADPH + H(+). The enzyme catalyses 7beta-hydroxy-3,12-dioxo-5beta-cholan-24-oate + NADP(+) = dehydrocholate + NADPH + H(+). 7beta-hydroxysteroid dehydrogenase that catalyzes the reduction of the 7-oxo group of 7-oxosteroids, such as 3alpha,12alpha-dihydroxy-7-oxo-5beta-cholanate, 7-oxolithocholate, 7,12-dioxo-lithocholate and dehydrocholate, to the corresponding 7beta-hydroxysteroids. Is also able to catalyze the reverse oxidation reactions. Together with 7alpha-HSDH encoded in the adjacent gene, is likely involved in the epimerization of the hydroxy group at C-7 of primary bile acids through 7-keto bile acid intermediates. This is 7beta-hydroxysteroid dehydrogenase from Clostridium sardiniense (Clostridium absonum).